The primary structure comprises 154 residues: Protein X (154 aa).

Residues Pro68–Phe117 form a mitochondrial targeting sequence region.

It belongs to the orthohepadnavirus protein X family. As to quaternary structure, may form homodimer. May interact with host CEBPA, CFLAR, CREB1, DDB1, E4F1, HBXIP, HSPD1/HSP60, NFKBIA, POLR2E and SMAD4. Interacts with host SMC5-SMC6 complex and induces its degradation. Interacts with host TRPC4AP; leading to prevent ubiquitination of TRPC4AP. Interacts with host PLSCR1; this interaction promotes ubiquitination and degradation of HBx and impairs HBx-mediated cell proliferation. Post-translationally, a fraction may be phosphorylated in insect cells and HepG2 cells, a human hepatoblastoma cell line. Phosphorylated in vitro by host protein kinase C or mitogen-activated protein kinase. N-acetylated in insect cells.

Its subcellular location is the host cytoplasm. It localises to the host nucleus. The protein resides in the host mitochondrion. In terms of biological role, multifunctional protein that plays a role in silencing host antiviral defenses and promoting viral transcription. Does not seem to be essential for HBV infection. May be directly involved in development of cirrhosis and liver cancer (hepatocellular carcinoma). Most of cytosolic activities involve modulation of cytosolic calcium. The effect on apoptosis is controversial depending on the cell types in which the studies have been conducted. May induce apoptosis by localizing in mitochondria and causing loss of mitochondrial membrane potential. May also modulate apoptosis by binding host CFLAR, a key regulator of the death-inducing signaling complex (DISC). Promotes viral transcription by using the host E3 ubiquitin ligase DDB1 to target the SMC5-SMC6 complex to proteasomal degradation. This host complex would otherwise bind to viral episomal DNA, and prevents its transcription. Moderately stimulates transcription of many different viral and cellular transcription elements. Promoters and enhancers stimulated by HBx contain DNA binding sites for NF-kappa-B, AP-1, AP-2, c-EBP, ATF/CREB, or the calcium-activated factor NF-AT. The sequence is that of Protein X from Homo sapiens (Human).